The primary structure comprises 125 residues: Gem-associated protein 7 (125 aa).

At methionine 1 the chain carries N-acetylmethionine. Residues 1 to 29 form the SUZ-C domain; that stretch reads MQTPLATPVPVLRLPRGPDGSNRGFAPDG. Residues 1–52 form a disordered region; the sequence is MQTPLATPVPVLRLPRGPDGSNRGFAPDGRRAPPKPEVPEPPESRESWEQQA. Threonine 3 carries the phosphothreonine modification. A Sm domain is found at 59–125; the sequence is RYLRSLLAMV…SDIISYTFKP (67 aa).

It belongs to the gemin-7 family. As to quaternary structure, part of the core SMN complex that contains SMN1, GEMIN2/SIP1, DDX20/GEMIN3, GEMIN4, GEMIN5, GEMIN6, GEMIN7, GEMIN8 and STRAP/UNRIP. Part of the SMN-Sm complex that contains SMN1, GEMIN2/SIP1, DDX20/GEMIN3, GEMIN4, GEMIN5, GEMIN6, GEMIN7, GEMIN8, STRAP/UNRIP and the Sm proteins SNRPB, SNRPD1, SNRPD2, SNRPD3, SNRPE, SNRPF and SNRPG. Interacts with GEMIN6; the interaction is direct. Interacts with STRAP/UNRIP; the interaction is direct. Interacts with GEMIN8; the interaction is direct. Interacts with SNRPB, SNRPD2, SNRPD3 and SNRPE; the interaction is direct.

It is found in the nucleus. The protein localises to the nucleoplasm. It localises to the gem. Its subcellular location is the cytoplasm. In terms of biological role, the SMN complex catalyzes the assembly of small nuclear ribonucleoproteins (snRNPs), the building blocks of the spliceosome, and thereby plays an important role in the splicing of cellular pre-mRNAs. Most spliceosomal snRNPs contain a common set of Sm proteins SNRPB, SNRPD1, SNRPD2, SNRPD3, SNRPE, SNRPF and SNRPG that assemble in a heptameric protein ring on the Sm site of the small nuclear RNA to form the core snRNP (Sm core). In the cytosol, the Sm proteins SNRPD1, SNRPD2, SNRPE, SNRPF and SNRPG are trapped in an inactive 6S pICln-Sm complex by the chaperone CLNS1A that controls the assembly of the core snRNP. To assemble core snRNPs, the SMN complex accepts the trapped 5Sm proteins from CLNS1A forming an intermediate. Binding of snRNA inside 5Sm triggers eviction of the SMN complex, thereby allowing binding of SNRPD3 and SNRPB to complete assembly of the core snRNP. This chain is Gem-associated protein 7 (GEMIN7), found in Bos taurus (Bovine).